Reading from the N-terminus, the 418-residue chain is 3-isopropylmalate dehydratase large subunit (418 aa).

Residues cysteine 299, cysteine 359, and cysteine 362 each contribute to the [4Fe-4S] cluster site.

This sequence belongs to the aconitase/IPM isomerase family. LeuC type 2 subfamily. In terms of assembly, heterodimer of LeuC and LeuD. It depends on [4Fe-4S] cluster as a cofactor.

The catalysed reaction is (2R,3S)-3-isopropylmalate = (2S)-2-isopropylmalate. The protein operates within amino-acid biosynthesis; L-leucine biosynthesis; L-leucine from 3-methyl-2-oxobutanoate: step 2/4. Functionally, catalyzes the isomerization between 2-isopropylmalate and 3-isopropylmalate, via the formation of 2-isopropylmaleate. The protein is 3-isopropylmalate dehydratase large subunit of Oleidesulfovibrio alaskensis (strain ATCC BAA-1058 / DSM 17464 / G20) (Desulfovibrio alaskensis).